Consider the following 1364-residue polypeptide: Toxin subunit YenA2 (1364 aa).

Residues 1025-1080 (SESYRRRRQEWELQYKQAEWEVNSVEQQINLQNMQIKAANKRLEQVEAQQQQAMAL) are a coiled coil.

As to quaternary structure, semipurified toxin complex consists of at least YenA1-YenA2-YenB-YenC1-YenC2-Chi1-Chi2. The Yen-TC:K9 subcomplex is about 26 nm tall and 22 nm in diameter with 5-fold symmetry and 5 copies of YenA1, YenA2, Chi1 and Chi2; the chitinase subunits may be solvent accessible on the exterior the complex. The Yen-TC:K9 subcomplex has no insecticidal activity. The native complex with additional YenB, YenC1 and YenC2 subunits is 16 nm taller and is insecticidal; the toxicity-conferring subunits are present at about 1 copy each. In terms of processing, the isolated toxin complex includes 3 peptides starting between residues 768 and 778 of this protein, which might be physiologically relevant.

The protein localises to the secreted. Part of an orally active toxin complex (TC) with strong insecticidal effects on larvae of the Coleoptera Costelytra zealandica, Acrossidius tasmania and Adoryphorus couloni and some Lepidoptera larvae. The TC has an endochitinase activity. This is Toxin subunit YenA2 from Yersinia entomophaga.